The following is a 151-amino-acid chain: Kinetoplast-associated protein 1 (151 aa).

Residues 1–9 (MLRVSVRSL) constitute a propeptide that is removed on maturation. The interval 13 to 151 (ASSKAGSKAA…KKGAAKKAHK (139 aa)) is disordered. Low complexity-rich tracts occupy residues 15 to 49 (SKAGSKAAVPAAAAAASAPLSPATSAASARAVPPV), 70 to 91 (AAAAPAKKAAAPKAAKAKTPAK), and 101 to 111 (SKPSAPKQAAG). Residues 112 to 151 (KMRKAAGKAQRKIKAAARKAAPKKMAKSFGKKGAAKKAHK) show a composition bias toward basic residues.

The protein belongs to the KAP family. In terms of assembly, associates with the kinetoplast DNA network.

It localises to the mitochondrion matrix. Its subcellular location is the kinetoplast. In terms of biological role, histone H1-like DNA-binding protein involved in the organization and segregation of kinetoplast DNA (kDNA). The mitochondrial DNA of kinetoplastid protozoa consists of about 5,000 minicircles and 20 to 30 maxicircles. These circular DNAs are held together by catenation into a highly organized compact disk structure referred to as a kinetoplast DNA (kDNA) network. Binds preferentially to a specific fragment of minicircle DNA and is able to compact kDNA networks through DNA charge neutralization and condensation. This Crithidia fasciculata protein is Kinetoplast-associated protein 1 (KAP4).